A 361-amino-acid polypeptide reads, in one-letter code: Chorismate synthase (361 aa).

NADP(+)-binding residues include arginine 48 and arginine 54. Residues 125–127, 238–239, glycine 278, 293–297, and arginine 319 each bind FMN; these read RSS, NA, and KPTSS.

Belongs to the chorismate synthase family. Homotetramer. Requires FMNH2 as cofactor.

The catalysed reaction is 5-O-(1-carboxyvinyl)-3-phosphoshikimate = chorismate + phosphate. It functions in the pathway metabolic intermediate biosynthesis; chorismate biosynthesis; chorismate from D-erythrose 4-phosphate and phosphoenolpyruvate: step 7/7. Catalyzes the anti-1,4-elimination of the C-3 phosphate and the C-6 proR hydrogen from 5-enolpyruvylshikimate-3-phosphate (EPSP) to yield chorismate, which is the branch point compound that serves as the starting substrate for the three terminal pathways of aromatic amino acid biosynthesis. This reaction introduces a second double bond into the aromatic ring system. The chain is Chorismate synthase from Vibrio campbellii (strain ATCC BAA-1116).